A 398-amino-acid polypeptide reads, in one-letter code: Small ribosomal subunit protein mS78 (rPPR3a) (398 aa).

Residues 1–19 constitute a mitochondrion transit peptide; it reads MSSLSRVLRGTFNTCPIRR. PPR repeat units follow at residues 108-142, 143-173, 179-213, 214-248, 249-283, 284-318, and 319-353; these read KEGFAARIISLYGKAGMFENAQKVFEEMPNRDCKR, SVLSFNALLSAYRLSKKFDVVEELFNELPGK, DIVSYNTLIKALCEKDSLPEAVALLDEIENKGLKP, DIVTFNTLLLSSYLKGQFELGEEIWAKMVEKNVAI, DIRTYNARLLGLANEAKSKELVNLFGELKASGLKP, DVFSFNAMIRGSINEGKMDEAEAWYKEIVKHGYRP, and DKATFALLLPAMCKAGDFESAIELFKETFSKRYLV.

The protein belongs to the PPR family. P subfamily. Component of the mitochondrial ribosome small subunit.

The protein resides in the mitochondrion. The polypeptide is Small ribosomal subunit protein mS78 (rPPR3a) (Arabidopsis thaliana (Mouse-ear cress)).